The following is a 443-amino-acid chain: Dihydroorotate dehydrogenase (quinone), mitochondrial (443 aa).

The transit peptide at 1 to 21 (MYQRSLFRGVAQGLKRSSVRF) directs the protein to the mitochondrion. Residues 38-54 (WKLLSVIGSFTAGVAIY) form a helical membrane-spanning segment. FMN is bound by residues 122–126 (AGFDK) and S146. K126 is a binding site for substrate. S168 bears the Phosphoserine mark. Residue 171-175 (NRYGF) participates in substrate binding. FMN-binding residues include N234 and N264. Substrate is bound at residue 264–269 (NVSSPN). The active-site Nucleophile is S267. K306 provides a ligand contact to FMN. A substrate-binding site is contributed by 335-336 (NT). FMN is bound by residues G358, G387, and 408-409 (YT).

It belongs to the dihydroorotate dehydrogenase family. Type 2 subfamily. The cofactor is FMN.

The protein localises to the mitochondrion inner membrane. The catalysed reaction is (S)-dihydroorotate + a quinone = orotate + a quinol. It participates in pyrimidine metabolism; UMP biosynthesis via de novo pathway; orotate from (S)-dihydroorotate (quinone route): step 1/1. Its function is as follows. In the de novo pyrimidine biosynthesis pathway, catalyzes the stereospecific oxidation of (S)-dihydroorotate to orotate with reduction of flavin and the transfer of electrons to ubiquinone, which is part of the respiratory chain. Does not use fumarate and NAD as electron acceptors. The chain is Dihydroorotate dehydrogenase (quinone), mitochondrial (ura3) from Schizosaccharomyces pombe (strain 972 / ATCC 24843) (Fission yeast).